Here is a 130-residue protein sequence, read N- to C-terminus: Large ribosomal subunit protein eL32 (130 aa).

This sequence belongs to the eukaryotic ribosomal protein eL32 family.

The protein is Large ribosomal subunit protein eL32 (rpl32e) of Pyrococcus horikoshii (strain ATCC 700860 / DSM 12428 / JCM 9974 / NBRC 100139 / OT-3).